The sequence spans 316 residues: F-box protein At4g09920 (316 aa).

The region spanning 1–47 (MDRIIGLPDEVLVKILSFVPTKVAVSTSILSKRWEFLWMWLTKLKFG) is the F-box domain.

This Arabidopsis thaliana (Mouse-ear cress) protein is F-box protein At4g09920.